The chain runs to 451 residues: Cysteine protease ATG4 (451 aa).

Cys-122 (nucleophile) is an active-site residue. Residues Asp-297 and His-299 contribute to the active site.

The protein belongs to the peptidase C54 family. As to quaternary structure, interacts with ATG8.

The protein resides in the cytoplasm. It is found in the nucleus. The protein localises to the preautophagosomal structure. The enzyme catalyses [protein]-C-terminal L-amino acid-glycyl-phosphatidylethanolamide + H2O = [protein]-C-terminal L-amino acid-glycine + a 1,2-diacyl-sn-glycero-3-phosphoethanolamine. In terms of biological role, cysteine protease that plays a key role in cytoplasm to vacuole transport (Cvt) and autophagy by mediating both proteolytic activation and delipidation of ATG8. Required for selective autophagic degradation of the nucleus (nucleophagy) as well as for mitophagy which contributes to regulate mitochondrial quantity and quality by eliminating the mitochondria to a basal level to fulfill cellular energy requirements and preventing excess ROS production. The protease activity is required for proteolytic activation of ATG8: cleaves the C-terminal amino acid of ATG8 to reveal a C-terminal glycine. ATG8 ubiquitin-like activity requires the exposure of the glycine at the C-terminus for its conjugation to phosphatidylethanolamine (PE) and its insertion to membranes, which is necessary for autophagy. The ATG8-PE conjugate mediates tethering between adjacent membranes and stimulates membrane hemifusion, leading to expansion of the autophagosomal membrane during autophagy. In addition to the protease activity, also catalyzes deconjugation of PE-conjugated forms of ATG8 during macroautophagy: ATG8 delipidation is required to release the protein from membranes, which facilitates multiple events during macroautophagy, and especially for efficient autophagosome biogenesis, the assembly of ATG9-containing tubulovesicular clusters into phagophores/autophagosomes, and for the disassembly of PAS-associated ATG components. ATG8 delipidation by ATG4 also recycles ATG8-PE generated on inappropriate membranes to maintain a reservoir of unlipidated ATG8 that is required for autophagosome formation at the PAS. The sequence is that of Cysteine protease ATG4 from Kluyveromyces marxianus (strain DMKU3-1042 / BCC 29191 / NBRC 104275) (Yeast).